A 177-amino-acid polypeptide reads, in one-letter code: MAADQGMLRDAMARVPAGVALVTAHDRGGVPHGFTASSFVSVSMEPPLALVCLARTANSFPVFDSCGEFAVSVLREDHTDLAMRFARKSADKFAGGEFVRTARGATVLDGAVAVVECTVHERYPAGDHIILLGEVQSVHVEEKGVPAVYVDRRFAALCSAAGACPSATGRGVPAHAG.

The protein to S.pristinaespiralis SnaC.

The protein operates within antibiotic biosynthesis; actinorhodin biosynthesis. The chain is Actinorhodin polyketide dimerase (actVB) from Streptomyces coelicolor (strain ATCC BAA-471 / A3(2) / M145).